A 286-amino-acid chain; its full sequence is Diaminopimelate epimerase (286 aa).

Asn-22, Gln-56, and Asn-76 together coordinate substrate. The Proton donor role is filled by Cys-85. Residues Gly-86–Asn-87, Asn-169, Asn-202, and Glu-220–Arg-221 each bind substrate. Cys-229 acts as the Proton acceptor in catalysis. Residue Gly-230–Ser-231 coordinates substrate.

Belongs to the diaminopimelate epimerase family. Homodimer.

Its subcellular location is the cytoplasm. It catalyses the reaction (2S,6S)-2,6-diaminopimelate = meso-2,6-diaminopimelate. Its pathway is amino-acid biosynthesis; L-lysine biosynthesis via DAP pathway; DL-2,6-diaminopimelate from LL-2,6-diaminopimelate: step 1/1. Functionally, catalyzes the stereoinversion of LL-2,6-diaminopimelate (L,L-DAP) to meso-diaminopimelate (meso-DAP), a precursor of L-lysine and an essential component of the bacterial peptidoglycan. In Buchnera aphidicola subsp. Baizongia pistaciae (strain Bp), this protein is Diaminopimelate epimerase.